The chain runs to 426 residues: Elongation factor 1-alpha (426 aa).

The 217-residue stretch at 5–221 folds into the tr-type G domain; sequence KPHINLAVIG…NALKEPEKPT (217 aa). Residues 14–21 are G1; sequence GHIDHGKS. 14-21 is a binding site for GTP; the sequence is GHIDHGKS. Ser-21 lines the Mg(2+) pocket. The G2 stretch occupies residues 70–74; that stretch reads GITID. The tract at residues 91–94 is G3; it reads DCPG. GTP is bound by residues 91–95 and 146–149; these read DCPGH and NKMD. Residues 146-149 are G4; it reads NKMD. The segment at 185-187 is G5; the sequence is SAF.

The protein belongs to the TRAFAC class translation factor GTPase superfamily. Classic translation factor GTPase family. EF-Tu/EF-1A subfamily.

It is found in the cytoplasm. The enzyme catalyses GTP + H2O = GDP + phosphate + H(+). In terms of biological role, GTP hydrolase that promotes the GTP-dependent binding of aminoacyl-tRNA to the A-site of ribosomes during protein biosynthesis. The sequence is that of Elongation factor 1-alpha from Methanocella arvoryzae (strain DSM 22066 / NBRC 105507 / MRE50).